A 479-amino-acid chain; its full sequence is Probable xyloglucan galactosyltransferase GT15 (479 aa).

Over 1–20 the chain is Cytoplasmic; the sequence is MKNNNSSSVSIENHPWKKKP. A helical; Signal-anchor for type II membrane protein membrane pass occupies residues 21-40; the sequence is TTLLLFLSLLSISLLLLRLS. Residues 41 to 479 lie on the Lumenal side of the membrane; that stretch reads QDKIILITTT…GIRRNEFKTD (439 aa). N-linked (GlcNAc...) asparagine glycosylation is found at Asn155, Asn242, Asn285, and Asn391.

The protein belongs to the glycosyltransferase 47 family. As to expression, expressed in roots, hypocotyls, cotyledons, leaves, stems and sepals.

It is found in the golgi apparatus membrane. Its function is as follows. Functions in xyloglucan synthesis by adding side chains to the xylosylated glucan backbone. Involved in the galactosylation of hemicellulose xyloglucan. The polypeptide is Probable xyloglucan galactosyltransferase GT15 (Arabidopsis thaliana (Mouse-ear cress)).